Here is a 541-residue protein sequence, read N- to C-terminus: Alpha-zingiberene synthase (541 aa).

Mg(2+)-binding residues include Asp296, Asp300, Asp437, Thr441, and Glu445. Positions 296–300 (DDIYD) match the DDXXD motif motif.

This sequence belongs to the terpene synthase family. Mg(2+) is required as a cofactor. Requires Mn(2+) as cofactor.

It carries out the reaction (2E,6E)-farnesyl diphosphate = alpha-zingiberene + diphosphate. The protein operates within secondary metabolite biosynthesis; terpenoid biosynthesis. Functionally, sesquiterpene synthase that catalyzes the formation of alpha-zingiberene and other sesquiterpenes from trans,trans-farnesyl diphosphate (FPP). May have an additional monoterpene synthase activity. This is Alpha-zingiberene synthase (ZIS) from Ocimum basilicum (Sweet basil).